Reading from the N-terminus, the 259-residue chain is Hydroxyacylglutathione hydrolase (259 aa).

Residues histidine 56, histidine 58, aspartate 60, histidine 61, histidine 112, aspartate 133, and histidine 171 each contribute to the Zn(2+) site.

This sequence belongs to the metallo-beta-lactamase superfamily. Glyoxalase II family. As to quaternary structure, monomer. The cofactor is Zn(2+).

The catalysed reaction is an S-(2-hydroxyacyl)glutathione + H2O = a 2-hydroxy carboxylate + glutathione + H(+). It participates in secondary metabolite metabolism; methylglyoxal degradation; (R)-lactate from methylglyoxal: step 2/2. Functionally, thiolesterase that catalyzes the hydrolysis of S-D-lactoyl-glutathione to form glutathione and D-lactic acid. This chain is Hydroxyacylglutathione hydrolase, found in Pseudomonas putida (strain ATCC 47054 / DSM 6125 / CFBP 8728 / NCIMB 11950 / KT2440).